The primary structure comprises 154 residues: Superoxide dismutase [Cu-Zn] (154 aa).

Cu cation contacts are provided by H47, H49, and H64. Cysteines 58 and 147 form a disulfide. Zn(2+) is bound by residues H64, H72, H81, and D84. H121 is a binding site for Cu cation. Positions 125 to 136 (DDLGKGGNEESL) are enriched in basic and acidic residues. A disordered region spans residues 125–144 (DDLGKGGNEESLKTGNAGPR). R144 lines the substrate pocket.

It belongs to the Cu-Zn superoxide dismutase family. As to quaternary structure, homodimer. Requires Cu cation as cofactor. Zn(2+) is required as a cofactor.

The protein resides in the cytoplasm. It catalyses the reaction 2 superoxide + 2 H(+) = H2O2 + O2. Destroys radicals which are normally produced within the cells and which are toxic to biological systems. In Candida glabrata (strain ATCC 2001 / BCRC 20586 / JCM 3761 / NBRC 0622 / NRRL Y-65 / CBS 138) (Yeast), this protein is Superoxide dismutase [Cu-Zn] (SOD1).